A 412-amino-acid chain; its full sequence is Cytochrome P450-SOY (412 aa).

The segment covering 1–25 has biased composition (polar residues); that stretch reads MTESTTDPARQNLDPTSPAPATSFP. Residues 1–38 are disordered; it reads MTESTTDPARQNLDPTSPAPATSFPQDRGCPYHPPAGY. Cysteine 361 lines the heme pocket.

It belongs to the cytochrome P450 family. Heme is required as a cofactor.

It localises to the cytoplasm. The chain is Cytochrome P450-SOY (cyp105D1) from Streptomyces griseus.